A 2014-amino-acid chain; its full sequence is Leucine-rich repeat serine/threonine-protein kinase 1 (2014 aa).

ANK repeat units lie at residues 51–81, 86–116, 119–148, 152–182, and 193–222; these read QCPS…CEES, EKGQ…ELPT, TDDN…GPCT, LLNW…DPEN, and IVRL…YFCS. 13 LRR repeats span residues 279–300, 303–324, 330–351, 353–374, 381–402, 405–426, 427–447, 451–472, 474–495, 498–519, 549–570, 572–594, and 596–617; these read QITE…IPWG, NLKK…QSSD, RLLE…FLHL, KLQK…ENAT, KLQE…FMHS, SLTS…WSCP, LKCC…MAVF, HLRD…LFQL, ALMF…EKWT, QLKT…LKTK, SLEV…VCLL, NLSE…LGQL, and NLWQ…VRKE. One can recognise a Roc domain in the interval 632 to 826; that stretch reads KAEKCKLMKM…QLIFHVTCNM (195 aa). The GDP site is built by proline 647, arginine 648, glycine 650, lysine 651, serine 652, threonine 653, glutamate 670, histidine 758, aspartate 760, cysteine 806, and lysine 807. The region spanning 840-1237 is the COR domain; that stretch reads GRLIPRSYIS…PARLFLENSK (398 aa). Threonine 1061 is modified (phosphothreonine). Phosphoserine occurs at positions 1064 and 1074. Phosphothreonine is present on threonine 1075. In terms of domain architecture, Protein kinase spans 1242 to 1525; it reads EGENSILGQG…VVSQMKDPTF (284 aa). ATP-binding positions include 1248–1256 and lysine 1270; that span reads LGQGGSGTV. Aspartate 1386 functions as the Proton acceptor in the catalytic mechanism. 7 WD repeats span residues 1539–1579, 1582–1622, 1623–1668, 1693–1729, 1730–1778, 1779–1948, and 1950–1986; these read AFFS…RMTC, MKLS…QALD, TPAV…SCSY, VKAM…RLEP, YAAP…YFCG, DPNP…AVLK, and RELN…AVWR. The WD40 loop; involved in dimer stabilization stretch occupies residues 1791–1906; it reads PSVLETPGSH…MDGETFSQHL (116 aa). The segment at 1839-1895 is disordered; it reads SMSSYSSSPPHQDPRSPSSLPSSLTSYSSVPFSANYEDSDRLQEPSVTSDRTEHDLS. Over residues 1853–1871 the composition is skewed to low complexity; that stretch reads RSPSSLPSSLTSYSSVPFS.

This sequence belongs to the protein kinase superfamily. TKL Ser/Thr protein kinase family. ROCO subfamily. As to quaternary structure, homodimer. The homodimer is autoinhibited and stabilized by its N-terminal residues and ANK repeats. Interacts with CSK. The cofactor is Mg(2+). Mn(2+) serves as cofactor. Autophosphorylated. Autophosphorylation in inhibited in its dimeric state. Phosphorylated by protein kinase C isozymes PRKCA, PRKCB, PRKCG, PRKCE, PRKCZ and PRKCT at Ser-1064, Ser-1074 and Thr-1075. Phosphorylation at these residues activates the kinase activity of LRRK1 to phosphorylate RAB7A. Expressed in osteoclasts and bone marrow stromal cells.

Its subcellular location is the cytoplasm. It is found in the cell membrane. The enzyme catalyses L-seryl-[protein] + ATP = O-phospho-L-seryl-[protein] + ADP + H(+). It catalyses the reaction L-threonyl-[protein] + ATP = O-phospho-L-threonyl-[protein] + ADP + H(+). Activated by phosphorylation by PKC. Binds both GTP and GDP; binding of GTP stimulates kinase activity. Sterically autoinhibited in its dimeric state. In terms of biological role, serine/threonine-protein kinase which phosphorylates RAB proteins involved in intracellular trafficking. Phosphorylates RAB7A; this activity is dependent on protein kinase C (PKC) activation. Plays a role in the negative regulation of bone mass, acting through the maturation of osteoclasts. The polypeptide is Leucine-rich repeat serine/threonine-protein kinase 1 (Mus musculus (Mouse)).